The sequence spans 484 residues: Replication factor C large subunit (484 aa).

46–53 (GPPGSGKT) lines the ATP pocket. Basic and acidic residues-rich tracts occupy residues 419-432 (VKTE…KTKE), 442-451 (RISEPPEPLK), and 459-478 (KSVE…KKQA). The tract at residues 419 to 484 (VKTETPKKKE…KKQATLDSFF (66 aa)) is disordered.

Belongs to the activator 1 small subunits family. RfcL subfamily. In terms of assembly, heteromultimer composed of small subunits (RfcS) and large subunits (RfcL).

In terms of biological role, part of the RFC clamp loader complex which loads the PCNA sliding clamp onto DNA. The chain is Replication factor C large subunit from Methanococcus maripaludis (strain C5 / ATCC BAA-1333).